We begin with the raw amino-acid sequence, 286 residues long: Shikimate dehydrogenase (NADP(+)) (286 aa).

Residues Thr-21–Ser-23 and Thr-68 contribute to the shikimate site. The active-site Proton acceptor is the Lys-72. Position 84 (Glu-84) interacts with NADP(+). 2 residues coordinate shikimate: Asn-93 and Asp-108. NADP(+)-binding positions include Gly-132 to Ala-136 and Leu-230. Tyr-232 serves as a coordination point for shikimate. Gly-253 contacts NADP(+).

It belongs to the shikimate dehydrogenase family. As to quaternary structure, homodimer.

It carries out the reaction shikimate + NADP(+) = 3-dehydroshikimate + NADPH + H(+). The protein operates within metabolic intermediate biosynthesis; chorismate biosynthesis; chorismate from D-erythrose 4-phosphate and phosphoenolpyruvate: step 4/7. Its function is as follows. Involved in the biosynthesis of the chorismate, which leads to the biosynthesis of aromatic amino acids. Catalyzes the reversible NADPH linked reduction of 3-dehydroshikimate (DHSA) to yield shikimate (SA). The sequence is that of Shikimate dehydrogenase (NADP(+)) from Microcystis aeruginosa (strain NIES-843 / IAM M-2473).